A 177-amino-acid chain; its full sequence is Actinorhodin polyketide dimerase (177 aa).

It to S.pristinaespiralis SnaC.

It functions in the pathway antibiotic biosynthesis; actinorhodin biosynthesis. In Streptomyces coelicolor (strain ATCC BAA-471 / A3(2) / M145), this protein is Actinorhodin polyketide dimerase (actVB).